The chain runs to 147 residues: MALKRINRELADLGKDPPSSCSAGPVGDDLFHWQATIMGPADSPYAGGVFFLSIHFPTDYPFKPPKVNFTTRIYHPNINSNGSICLDILRDQWSPALTISKVLLSICSLLTDPNPDDPLVPEIAHVYKTDRSRYELSAREWTRKYAI.

A UBC core domain is found at 1-147; that stretch reads MALKRINREL…AREWTRKYAI (147 aa). Catalysis depends on C85, which acts as the Glycyl thioester intermediate.

The protein belongs to the ubiquitin-conjugating enzyme family. Interacts with the E1 ubiquitin-activating enzyme ptr3 and E3 ubiquitin-protein ligase pub2.

The enzyme catalyses S-ubiquitinyl-[E1 ubiquitin-activating enzyme]-L-cysteine + [E2 ubiquitin-conjugating enzyme]-L-cysteine = [E1 ubiquitin-activating enzyme]-L-cysteine + S-ubiquitinyl-[E2 ubiquitin-conjugating enzyme]-L-cysteine.. It participates in protein modification; protein ubiquitination. Its function is as follows. E2 ubiquitin-conjugating enzyme that catalyzes the covalent attachment of ubiquitin to other proteins. Mediates the selective degradation of short-lived and abnormal proteins. Mediates ubiquitination of pex5. This Schizosaccharomyces pombe (strain 972 / ATCC 24843) (Fission yeast) protein is Ubiquitin-conjugating enzyme E2 4 (ubc4).